Consider the following 206-residue polypeptide: Pyridoxine/pyridoxamine 5'-phosphate oxidase (206 aa).

FMN contacts are provided by residues 55–60, 70–71, R76, K77, and Q99; these read RVVLLK and YT. Residue K60 participates in substrate binding. Positions 117, 121, and 125 each coordinate substrate. Residues 134-135 and W179 contribute to the FMN site; that span reads QS. 185–187 contributes to the substrate binding site; it reads RLH. Residue R189 coordinates FMN.

Belongs to the pyridoxamine 5'-phosphate oxidase family. In terms of assembly, homodimer. Requires FMN as cofactor.

It carries out the reaction pyridoxamine 5'-phosphate + O2 + H2O = pyridoxal 5'-phosphate + H2O2 + NH4(+). The enzyme catalyses pyridoxine 5'-phosphate + O2 = pyridoxal 5'-phosphate + H2O2. It functions in the pathway cofactor metabolism; pyridoxal 5'-phosphate salvage; pyridoxal 5'-phosphate from pyridoxamine 5'-phosphate: step 1/1. The protein operates within cofactor metabolism; pyridoxal 5'-phosphate salvage; pyridoxal 5'-phosphate from pyridoxine 5'-phosphate: step 1/1. Functionally, catalyzes the oxidation of either pyridoxine 5'-phosphate (PNP) or pyridoxamine 5'-phosphate (PMP) into pyridoxal 5'-phosphate (PLP). This Myxococcus xanthus (strain DK1622) protein is Pyridoxine/pyridoxamine 5'-phosphate oxidase.